Here is a 273-residue protein sequence, read N- to C-terminus: MASSASSLHFLSLTPQTLPLPKPTSQTTSLSFFSLPPSSLNLSLSSSSSCFSSRFVRKVTLSDFDQIEDVEDGDDGVEEERNFSPDLKIFVGNLPFSADSAALAELFERAGNVEMVEVIYDKLTGRSRGFGFVTMSSKEEVEAACQQFNGYELDGRALRVNSGPPPEKRENSSFRGGSRGGGSFDSSNRVYVGNLAWGVDQDALETLFSEQGKVVDAKVVYDRDSGRSRGFGFVTYSSAEEVNNAIESLDGVDLNGRAIRVSPAEARPPRRQF.

Residues Met1–Lys58 constitute a chloroplast transit peptide. The region spanning Leu87 to Pro165 is the RRM 1 domain. The segment at Arg156 to Gly181 is disordered. Positions Pro166 to Ser187 are linker (Gly-rich). One can recognise an RRM 2 domain in the interval Asn188 to Ala266.

It is found in the plastid. It localises to the chloroplast. In terms of biological role, could be involved in splicing and/or processing of chloroplast RNA's. The chain is 29 kDa ribonucleoprotein A, chloroplastic from Nicotiana sylvestris (Wood tobacco).